The primary structure comprises 229 residues: Urease accessory protein UreG (229 aa).

24 to 31 contributes to the GTP binding site; that stretch reads GPVGSGKT.

Belongs to the SIMIBI class G3E GTPase family. UreG subfamily. In terms of assembly, homodimer. UreD, UreF and UreG form a complex that acts as a GTP-hydrolysis-dependent molecular chaperone, activating the urease apoprotein by helping to assemble the nickel containing metallocenter of UreC. The UreE protein probably delivers the nickel.

The protein resides in the cytoplasm. Facilitates the functional incorporation of the urease nickel metallocenter. This process requires GTP hydrolysis, probably effectuated by UreG. This chain is Urease accessory protein UreG, found in Albidiferax ferrireducens (strain ATCC BAA-621 / DSM 15236 / T118) (Rhodoferax ferrireducens).